The chain runs to 222 residues: uncharacterized protein (222 aa).

This is an uncharacterized protein from Methanocaldococcus jannaschii (strain ATCC 43067 / DSM 2661 / JAL-1 / JCM 10045 / NBRC 100440) (Methanococcus jannaschii).